We begin with the raw amino-acid sequence, 592 residues long: Protein kinase C zeta type (592 aa).

The 84-residue stretch at 15–98 folds into the PB1 domain; sequence RVRLKAHYGG…EVLIIHVFPS (84 aa). The interval 79-145 is interaction with SQSTM1; the sequence is AFRLACQGRD…KRFNRRAYCG (67 aa). A Phorbol-ester/DAG-type zinc finger spans residues 130-180; sequence GHLFQAKRFNRRAYCGQCSERIWGLARQGYRCINCKLLVHKRCHVLVPLTC. In terms of domain architecture, Protein kinase spans 252-518; it reads FDLIRVIGRG…FSDIKSHAFF (267 aa). ATP contacts are provided by residues 258–266 and lysine 281; that span reads IGRGSYAKV. Catalysis depends on aspartate 376, which acts as the Proton acceptor. A Phosphothreonine; by PDPK1 and PI3K modification is found at threonine 410. Residues 519 to 590 form the AGC-kinase C-terminal domain; sequence RSIDWDLLEK…INPLLLSAEE (72 aa). Threonine 560 bears the Phosphothreonine mark. Serine 591 bears the Phosphoserine mark.

Belongs to the protein kinase superfamily. AGC Ser/Thr protein kinase family. PKC subfamily. Interacts with PARD6A, PARD6B and PARD6G. Part of a complex with PARD3, PARD6A or PARD6B or PARD6G and CDC42 or RAC1. Interacts with ADAP1/CENTA1. Forms a ternary complex with SQSTM1 and KCNAB2. Forms another ternary complex with SQSTM1 and GABRR3. Forms a complex with SQSTM1 and MAP2K5. Interacts (via the protein kinase domain) with WWC1. Forms a tripartite complex with WWC1 and DDR1, but predominantly in the absence of collagen. Component of the Par polarity complex, composed of at least phosphorylated PRKCZ, PARD3 and TIAM1. Interacts with PDPK1 (via N-terminal region). Interacts with WDFY2 (via WD repeats 1-3). Interacts with VAMP2. Forms a complex with WDFY2 and VAMP2. Interacts with APPL1. Interacts with WWC1, WWC2 and WWC3. In terms of processing, CDH5 is required for its phosphorylation at Thr-410. Phosphorylated by protein kinase PDPK1; phosphorylation is inhibited by the apoptotic C-terminal cleavage product of PKN2. Phosphorylation at Thr-410 by PI3K activates the kinase. Isoform 1: In brain, expressed in hippocampus, neocortex and cerebellum (at protein level). Also expressed in lung, liver, kidney, testis and to a lesser extent in pancreas, intestine and skin (at protein level). Isoform 2: Specifically expressed in brain where it localizes to the hippocampus, neocortex and cerebellum (at protein level).

The protein localises to the cytoplasm. It is found in the endosome. It localises to the cell junction. Its subcellular location is the membrane. It carries out the reaction L-seryl-[protein] + ATP = O-phospho-L-seryl-[protein] + ADP + H(+). The catalysed reaction is L-threonyl-[protein] + ATP = O-phospho-L-threonyl-[protein] + ADP + H(+). Atypical PKCs (PRKCI and PRKCZ) exhibit an elevated basal enzymatic activity (that may be due to the interaction with SMG1 or SQSTM1) and are not regulated by diacylglycerol, phosphatidylserine, phorbol esters or calcium ions. Two specific sites, Thr-410 (activation loop of the kinase domain) and Thr-560 (turn motif), need to be phosphorylated for its full activation. Phosphatidylinositol 3,4,5-trisphosphate might be a physiological activator. Isoform 2: Constitutively active. Its function is as follows. Calcium- and diacylglycerol-independent serine/threonine-protein kinase that functions in phosphatidylinositol 3-kinase (PI3K) pathway and mitogen-activated protein (MAP) kinase cascade, and is involved in NF-kappa-B activation, mitogenic signaling, cell proliferation, cell polarity, inflammatory response and maintenance of long-term potentiation (LTP). Upon lipopolysaccharide (LPS) treatment in macrophages, or following mitogenic stimuli, functions downstream of PI3K to activate MAP2K1/MEK1-MAPK1/ERK2 signaling cascade independently of RAF1 activation. Required for insulin-dependent activation of AKT3, but may function as an adapter rather than a direct activator. Upon insulin treatment may act as a downstream effector of PI3K and contribute to the activation of translocation of the glucose transporter SLC2A4/GLUT4 and subsequent glucose transport in adipocytes. In EGF-induced cells, binds and activates MAP2K5/MEK5-MAPK7/ERK5 independently of its kinase activity and can activate JUN promoter through MEF2C. Through binding with SQSTM1/p62, functions in interleukin-1 signaling and activation of NF-kappa-B with the specific adapters RIPK1 and TRAF6. Participates in TNF-dependent transactivation of NF-kappa-B by phosphorylating and activating IKBKB kinase, which in turn leads to the degradation of NF-kappa-B inhibitors. In migrating astrocytes, forms a cytoplasmic complex with PARD6A and is recruited by CDC42 to function in the establishment of cell polarity along with the microtubule motor and dynein. In association with FEZ1, stimulates neuronal differentiation in PC12 cells. In the inflammatory response, is required for the T-helper 2 (Th2) differentiation process, including interleukin production, efficient activation of JAK1 and the subsequent phosphorylation and nuclear translocation of STAT6. May be involved in development of allergic airway inflammation (asthma), a process dependent on Th2 immune response. In the NF-kappa-B-mediated inflammatory response, can relieve SETD6-dependent repression of NF-kappa-B target genes by phosphorylating the RELA subunit at 'Ser-311'. Phosphorylates VAMP2 in vitro. Phosphorylates and activates LRRK1, which phosphorylates RAB proteins involved in intracellular trafficking. In terms of biological role, involved in late synaptic long term potentiation phase in CA1 hippocampal cells and long term memory maintenance. The chain is Protein kinase C zeta type (Prkcz) from Rattus norvegicus (Rat).